A 378-amino-acid polypeptide reads, in one-letter code: tRNA-specific 2-thiouridylase MnmA (378 aa).

ATP is bound by residues 6 to 13 (AMSGGVDS) and Leu-32. Cys-101 acts as the Nucleophile in catalysis. Cys-101 and Cys-199 are joined by a disulfide. Gly-125 contacts ATP. The tract at residues 148–150 (KDQ) is interaction with tRNA. Residue Cys-199 is the Cysteine persulfide intermediate of the active site.

The protein belongs to the MnmA/TRMU family.

Its subcellular location is the cytoplasm. It catalyses the reaction S-sulfanyl-L-cysteinyl-[protein] + uridine(34) in tRNA + AH2 + ATP = 2-thiouridine(34) in tRNA + L-cysteinyl-[protein] + A + AMP + diphosphate + H(+). Its function is as follows. Catalyzes the 2-thiolation of uridine at the wobble position (U34) of tRNA, leading to the formation of s(2)U34. This chain is tRNA-specific 2-thiouridylase MnmA, found in Micrococcus luteus (strain ATCC 4698 / DSM 20030 / JCM 1464 / CCM 169 / CCUG 5858 / IAM 1056 / NBRC 3333 / NCIMB 9278 / NCTC 2665 / VKM Ac-2230) (Micrococcus lysodeikticus).